We begin with the raw amino-acid sequence, 339 residues long: Ketol-acid reductoisomerase (NADP(+)) (339 aa).

Residues 1 to 182 form the KARI N-terminal Rossmann domain; the sequence is MPNRYYEKDG…GCLKAGVIDT (182 aa). NADP(+)-binding positions include 25-28, Ser51, Ser53, and 83-86; these read YGSQ and DHIQ. Residue His108 is part of the active site. Gly134 serves as a coordination point for NADP(+). The region spanning 183–328 is the KARI C-terminal knotted domain; sequence NFREETESDL…RELREMMTFL (146 aa). Residues Asp191, Glu195, Glu227, and Glu231 each contribute to the Mg(2+) site. Residue Ser252 coordinates substrate.

Belongs to the ketol-acid reductoisomerase family. It depends on Mg(2+) as a cofactor.

It catalyses the reaction (2R)-2,3-dihydroxy-3-methylbutanoate + NADP(+) = (2S)-2-acetolactate + NADPH + H(+). The enzyme catalyses (2R,3R)-2,3-dihydroxy-3-methylpentanoate + NADP(+) = (S)-2-ethyl-2-hydroxy-3-oxobutanoate + NADPH + H(+). It functions in the pathway amino-acid biosynthesis; L-isoleucine biosynthesis; L-isoleucine from 2-oxobutanoate: step 2/4. The protein operates within amino-acid biosynthesis; L-valine biosynthesis; L-valine from pyruvate: step 2/4. Functionally, involved in the biosynthesis of branched-chain amino acids (BCAA). Catalyzes an alkyl-migration followed by a ketol-acid reduction of (S)-2-acetolactate (S2AL) to yield (R)-2,3-dihydroxy-isovalerate. In the isomerase reaction, S2AL is rearranged via a Mg-dependent methyl migration to produce 3-hydroxy-3-methyl-2-ketobutyrate (HMKB). In the reductase reaction, this 2-ketoacid undergoes a metal-dependent reduction by NADPH to yield (R)-2,3-dihydroxy-isovalerate. This chain is Ketol-acid reductoisomerase (NADP(+)), found in Solibacter usitatus (strain Ellin6076).